The primary structure comprises 833 residues: Zinc phosphodiesterase ELAC protein 2 homolog (833 aa).

Residues 1-19 constitute a mitochondrion transit peptide; sequence MLGAIARKTVENRILVSRH. Pro residues predominate over residues 624 to 646; that stretch reads LTPPGSPGGPPGKRPRLPSPHLP. Residues 624–652 are disordered; that stretch reads LTPPGSPGGPPGKRPRLPSPHLPPSRDVL.

This sequence belongs to the RNase Z family. As to quaternary structure, homodimer. Requires Zn(2+) as cofactor. In terms of tissue distribution, highly expressed in the germline.

The protein resides in the mitochondrion. It is found in the nucleus. It carries out the reaction Endonucleolytic cleavage of RNA, removing extra 3' nucleotides from tRNA precursor, generating 3' termini of tRNAs. A 3'-hydroxy group is left at the tRNA terminus and a 5'-phosphoryl group is left at the trailer molecule.. In terms of biological role, zinc phosphodiesterase, which displays some tRNA 3'-processing endonuclease activity. Probably involved in tRNA maturation, by removing a 3'-trailer from precursor tRNA. Involved in germline proliferation. May be required for both mitosis and meiosis in germ cells. Does not regulate the mitochondrial unfolded protein response following mitochondrial stress. Its function is as follows. Plays a role in mitochondrial unfolded protein response. Upon mitochondrial stress is exported from the nucleus where its tRNA endonuclease activity is negatively regulated. In response to mitochondrial stress, might be involved in activating a transcriptional response in an ATFS-1- and DVE-1-dependent manner. May play a role in negatively regulating the mitochondrial membrane potential. In Caenorhabditis elegans, this protein is Zinc phosphodiesterase ELAC protein 2 homolog.